Reading from the N-terminus, the 197-residue chain is Probable chorismate pyruvate-lyase 2 (197 aa).

Residues 1–14 (MRFDAADAHWRETP) are compositionally biased toward basic and acidic residues. The interval 1-23 (MRFDAADAHWRETPRPGASSAQK) is disordered. 3 residues coordinate substrate: Arg73, Leu111, and Glu173.

The protein belongs to the UbiC family.

It localises to the cytoplasm. It catalyses the reaction chorismate = 4-hydroxybenzoate + pyruvate. It functions in the pathway cofactor biosynthesis; ubiquinone biosynthesis. Its function is as follows. Removes the pyruvyl group from chorismate, with concomitant aromatization of the ring, to provide 4-hydroxybenzoate (4HB) for the ubiquinone pathway. This is Probable chorismate pyruvate-lyase 2 from Burkholderia pseudomallei (strain 1710b).